We begin with the raw amino-acid sequence, 697 residues long: Glycine--tRNA ligase beta subunit (697 aa).

It belongs to the class-II aminoacyl-tRNA synthetase family. As to quaternary structure, tetramer of two alpha and two beta subunits.

It localises to the cytoplasm. The enzyme catalyses tRNA(Gly) + glycine + ATP = glycyl-tRNA(Gly) + AMP + diphosphate. The protein is Glycine--tRNA ligase beta subunit of Solidesulfovibrio magneticus (strain ATCC 700980 / DSM 13731 / RS-1) (Desulfovibrio magneticus).